We begin with the raw amino-acid sequence, 30 residues long: Dendrotoxin B (30 aa).

Cysteine 3 and cysteine 22 are joined by a disulfide.

This sequence belongs to the three-finger toxin family. Short-chain subfamily. Orphan group XI sub-subfamily. In terms of processing, contains 4 disulfide bonds. In terms of tissue distribution, expressed by the venom gland.

The protein resides in the secreted. Blocks voltage-gated potassium channels (Kv). This is the slowly inactivating phase of potassium efflux which is blocked by this toxin. The protein is Dendrotoxin B of Dendroaspis angusticeps (Eastern green mamba).